The following is a 150-amino-acid chain: Small ribosomal subunit protein uS15 (150 aa).

Residues 1–22 (MNKRREKGQSHSTRPPHPQPPQ) are disordered.

This sequence belongs to the universal ribosomal protein uS15 family. As to quaternary structure, part of the 30S ribosomal subunit.

The polypeptide is Small ribosomal subunit protein uS15 (Aeropyrum pernix (strain ATCC 700893 / DSM 11879 / JCM 9820 / NBRC 100138 / K1)).